The sequence spans 265 residues: Cytochrome c oxidase subunit 3 (265 aa).

The next 6 helical transmembrane spans lie at 41–61, 85–105, 137–157, 162–182, 200–220, and 245–265; these read GGAR…FVWW, GFIL…WAFF, TLIL…ILAG, AVYA…FQGM, FFLA…FLII, and WHFV…WGGI.

The protein belongs to the cytochrome c oxidase subunit 3 family. In terms of assembly, component of the cytochrome c oxidase (complex IV, CIV), a multisubunit enzyme composed of a catalytic core of 3 subunits and several supernumerary subunits. The complex exists as a monomer or a dimer and forms supercomplexes (SCs) in the inner mitochondrial membrane with ubiquinol-cytochrome c oxidoreductase (cytochrome b-c1 complex, complex III, CIII).

It is found in the mitochondrion inner membrane. The enzyme catalyses 4 Fe(II)-[cytochrome c] + O2 + 8 H(+)(in) = 4 Fe(III)-[cytochrome c] + 2 H2O + 4 H(+)(out). Component of the cytochrome c oxidase, the last enzyme in the mitochondrial electron transport chain which drives oxidative phosphorylation. The respiratory chain contains 3 multisubunit complexes succinate dehydrogenase (complex II, CII), ubiquinol-cytochrome c oxidoreductase (cytochrome b-c1 complex, complex III, CIII) and cytochrome c oxidase (complex IV, CIV), that cooperate to transfer electrons derived from NADH and succinate to molecular oxygen, creating an electrochemical gradient over the inner membrane that drives transmembrane transport and the ATP synthase. Cytochrome c oxidase is the component of the respiratory chain that catalyzes the reduction of oxygen to water. Electrons originating from reduced cytochrome c in the intermembrane space (IMS) are transferred via the dinuclear copper A center (CU(A)) of subunit 2 and heme A of subunit 1 to the active site in subunit 1, a binuclear center (BNC) formed by heme A3 and copper B (CU(B)). The BNC reduces molecular oxygen to 2 water molecules using 4 electrons from cytochrome c in the IMS and 4 protons from the mitochondrial matrix. In Arabidopsis thaliana (Mouse-ear cress), this protein is Cytochrome c oxidase subunit 3 (COX3).